The sequence spans 314 residues: Olfactory receptor 2W3 (314 aa).

Residues Met1–Arg25 are Extracellular-facing. Residue Asn5 is glycosylated (N-linked (GlcNAc...) asparagine). Residues Ile26–Ser49 form a helical membrane-spanning segment. The Cytoplasmic segment spans residues Arg50–Thr57. The chain crosses the membrane as a helical span at residues Pro58–Pro79. The Extracellular portion of the chain corresponds to Gln80 to Gln100. The chain crosses the membrane as a helical span at residues Leu101–Tyr120. Topologically, residues Asp121–Arg139 are cytoplasmic. Residues Leu140–Ala158 form a helical membrane-spanning segment. The Extracellular segment spans residues Met159–Ile195. The chain crosses the membrane as a helical span at residues Glu196–Ser219. At Tyr220–Lys236 the chain is on the cytoplasmic side. The chain crosses the membrane as a helical span at residues Ala237–Tyr259. Residues Met260–Met272 lie on the Extracellular side of the membrane. Residues Phe273–Leu292 traverse the membrane as a helical segment. At Arg293–Glu314 the chain is on the cytoplasmic side.

Belongs to the G-protein coupled receptor 1 family.

The protein localises to the cell membrane. Odorant receptor. The protein is Olfactory receptor 2W3 (OR2W3) of Homo sapiens (Human).